Here is a 153-residue protein sequence, read N- to C-terminus: Ribosomal RNA large subunit methyltransferase H (153 aa).

Residues L70, G102, and 121–126 contribute to the S-adenosyl-L-methionine site; that span reads LSSMTF.

Belongs to the RNA methyltransferase RlmH family. In terms of assembly, homodimer.

It localises to the cytoplasm. The catalysed reaction is pseudouridine(1915) in 23S rRNA + S-adenosyl-L-methionine = N(3)-methylpseudouridine(1915) in 23S rRNA + S-adenosyl-L-homocysteine + H(+). Functionally, specifically methylates the pseudouridine at position 1915 (m3Psi1915) in 23S rRNA. This chain is Ribosomal RNA large subunit methyltransferase H, found in Dictyoglomus thermophilum (strain ATCC 35947 / DSM 3960 / H-6-12).